The following is a 300-amino-acid chain: Ribosomal RNA small subunit methyltransferase H (300 aa).

S-adenosyl-L-methionine contacts are provided by residues glycine 46–histidine 48, aspartate 65, phenylalanine 92, aspartate 107, and glutamine 114.

It belongs to the methyltransferase superfamily. RsmH family.

It is found in the cytoplasm. The enzyme catalyses cytidine(1402) in 16S rRNA + S-adenosyl-L-methionine = N(4)-methylcytidine(1402) in 16S rRNA + S-adenosyl-L-homocysteine + H(+). Its function is as follows. Specifically methylates the N4 position of cytidine in position 1402 (C1402) of 16S rRNA. This Prochlorococcus marinus subsp. pastoris (strain CCMP1986 / NIES-2087 / MED4) protein is Ribosomal RNA small subunit methyltransferase H.